We begin with the raw amino-acid sequence, 467 residues long: Dimethylamine methyltransferase MtbB1 (467 aa).

Position 356 (pyrrolysine 356) is a non-standard amino acid, pyrrolysine.

The protein belongs to the dimethylamine methyltransferase family.

It catalyses the reaction Co(I)-[dimethylamine-specific corrinoid protein] + dimethylamine + H(+) = methyl-Co(III)-[dimethylamine-specific corrinoid protein] + methylamine. It functions in the pathway one-carbon metabolism; methanogenesis from dimethylamine. Functionally, catalyzes the transfer of a methyl group from dimethylamine to the corrinoid cofactor of MtbC. The sequence is that of Dimethylamine methyltransferase MtbB1 (mtbB1) from Methanosarcina acetivorans (strain ATCC 35395 / DSM 2834 / JCM 12185 / C2A).